A 159-amino-acid polypeptide reads, in one-letter code: 3-hydroxyacyl-[acyl-carrier-protein] dehydratase FabZ (159 aa).

His65 is a catalytic residue.

It belongs to the thioester dehydratase family. FabZ subfamily.

The protein resides in the cytoplasm. It carries out the reaction a (3R)-hydroxyacyl-[ACP] = a (2E)-enoyl-[ACP] + H2O. In terms of biological role, involved in unsaturated fatty acids biosynthesis. Catalyzes the dehydration of short chain beta-hydroxyacyl-ACPs and long chain saturated and unsaturated beta-hydroxyacyl-ACPs. The protein is 3-hydroxyacyl-[acyl-carrier-protein] dehydratase FabZ of Microcystis aeruginosa (strain NIES-843 / IAM M-2473).